The sequence spans 205 residues: MSIKYVATSKLPTPWGVFAMHGFEDSETGKEHVALTFGDLSGDAPVLGRIHSECLTGDALFSLRCDCGFQLQTAMQRIAETGRGFILYLRQEGRGIGLLNKIRAYELQDKGANTVEANEQLGFAADMRKYDMIAPMLAHLGISRVKLMTNNPRKVNAMKDVGMDVVERVPLQVGKNRYNEAYLKTKSDKLGHMMSEEHFKAQHQD.

Position 49 to 53 (49 to 53) interacts with GTP; sequence RIHSE. Zn(2+)-binding residues include C54, C65, and C67. Residues Q70, 92–94, and T114 each bind GTP; that span reads EGR. D126 (proton acceptor) is an active-site residue. R128 serves as the catalytic Nucleophile. Residues T149 and K154 each contribute to the GTP site.

This sequence belongs to the GTP cyclohydrolase II family. Requires Zn(2+) as cofactor.

It catalyses the reaction GTP + 4 H2O = 2,5-diamino-6-hydroxy-4-(5-phosphoribosylamino)-pyrimidine + formate + 2 phosphate + 3 H(+). It participates in cofactor biosynthesis; riboflavin biosynthesis; 5-amino-6-(D-ribitylamino)uracil from GTP: step 1/4. Catalyzes the conversion of GTP to 2,5-diamino-6-ribosylamino-4(3H)-pyrimidinone 5'-phosphate (DARP), formate and pyrophosphate. The chain is GTP cyclohydrolase-2 from Shewanella amazonensis (strain ATCC BAA-1098 / SB2B).